The chain runs to 334 residues: Thiamine-binding periplasmic protein (334 aa).

The first 23 residues, 1–23 (MRLLSLLTFSLFAVIGLAPAAQA), serve as a signal peptide directing secretion. Thiamine contacts are provided by residues 64 to 65 (DG), 166 to 167 (AT), Trp-202, and 220 to 223 (YTTS).

This sequence belongs to the bacterial solute-binding protein 1 family. The complex is composed of two ATP-binding proteins (ThiQ), two transmembrane proteins (ThiP) and a solute-binding protein (ThiB).

It is found in the periplasm. Its function is as follows. Part of the ABC transporter complex ThiBPQ involved in thiamine import. In Brucella suis biovar 1 (strain 1330), this protein is Thiamine-binding periplasmic protein (thiB).